Consider the following 238-residue polypeptide: MRPNDRKADQVRPIKITRNYTAYAEGSVLVEFGNTKVLCNATVEESVPRWLKGQGRGWVTAEYGMLPRATHSRTRREAANGKQGGRTMEIQRLIARSLRAVVDLQAMGEFMITVDCDVIQADGGTRTASISGASVAMADAFQHLVDSGKLKANPMKGHVAAVSVGLLGDEVLCDLEYVEDSAADTDMNVVMTEEGKMIEIQGTAEGEPFSHEQLMALLESAKVGITEIVAAQKAALAN.

Phosphate is bound by residues arginine 86 and 124-126 (GTR).

Belongs to the RNase PH family. As to quaternary structure, homohexameric ring arranged as a trimer of dimers.

It catalyses the reaction tRNA(n+1) + phosphate = tRNA(n) + a ribonucleoside 5'-diphosphate. In terms of biological role, phosphorolytic 3'-5' exoribonuclease that plays an important role in tRNA 3'-end maturation. Removes nucleotide residues following the 3'-CCA terminus of tRNAs; can also add nucleotides to the ends of RNA molecules by using nucleoside diphosphates as substrates, but this may not be physiologically important. Probably plays a role in initiation of 16S rRNA degradation (leading to ribosome degradation) during starvation. This chain is Ribonuclease PH, found in Vibrio parahaemolyticus serotype O3:K6 (strain RIMD 2210633).